The chain runs to 101 residues: Feather keratin Cos2-3 (101 aa).

The residue at position 2 (Ser2) is an N-acetylserine.

The protein belongs to the avian keratin family. The avian keratins (F-ker, S-ker, C-ker and B-ker) are a complex mixture of very similar polypeptides.

This chain is Feather keratin Cos2-3, found in Columba livia (Rock dove).